The following is a 199-amino-acid chain: ATP-dependent Clp protease proteolytic subunit 2 (199 aa).

Ser-98 functions as the Nucleophile in the catalytic mechanism. His-123 is an active-site residue.

It belongs to the peptidase S14 family. As to quaternary structure, fourteen ClpP subunits assemble into 2 heptameric rings which stack back to back to give a disk-like structure with a central cavity, resembling the structure of eukaryotic proteasomes.

Its subcellular location is the cytoplasm. It catalyses the reaction Hydrolysis of proteins to small peptides in the presence of ATP and magnesium. alpha-casein is the usual test substrate. In the absence of ATP, only oligopeptides shorter than five residues are hydrolyzed (such as succinyl-Leu-Tyr-|-NHMec, and Leu-Tyr-Leu-|-Tyr-Trp, in which cleavage of the -Tyr-|-Leu- and -Tyr-|-Trp bonds also occurs).. In terms of biological role, cleaves peptides in various proteins in a process that requires ATP hydrolysis. Has a chymotrypsin-like activity. Plays a major role in the degradation of misfolded proteins. The polypeptide is ATP-dependent Clp protease proteolytic subunit 2 (Corynebacterium efficiens (strain DSM 44549 / YS-314 / AJ 12310 / JCM 11189 / NBRC 100395)).